Reading from the N-terminus, the 202-residue chain is Cytochrome c oxidase assembly protein CtaG (202 aa).

Residues Met1 to Asn14 lie on the Cytoplasmic side of the membrane. A helical; Signal-anchor for type II membrane protein membrane pass occupies residues Asn15–Val37. The Periplasmic segment spans residues Pro38–Leu202.

This sequence belongs to the COX11/CtaG family.

The protein resides in the cell inner membrane. In terms of biological role, exerts its effect at some terminal stage of cytochrome c oxidase synthesis, probably by being involved in the insertion of the copper B into subunit I. This chain is Cytochrome c oxidase assembly protein CtaG, found in Rhizobium johnstonii (strain DSM 114642 / LMG 32736 / 3841) (Rhizobium leguminosarum bv. viciae).